A 428-amino-acid polypeptide reads, in one-letter code: Histidine--tRNA ligase (428 aa).

Belongs to the class-II aminoacyl-tRNA synthetase family. Homodimer.

The protein localises to the cytoplasm. The catalysed reaction is tRNA(His) + L-histidine + ATP = L-histidyl-tRNA(His) + AMP + diphosphate + H(+). This is Histidine--tRNA ligase from Lactobacillus helveticus (strain DPC 4571).